The following is a 567-amino-acid chain: Oxygen-dependent choline dehydrogenase (567 aa).

6–35 (DYIIVGAGSAGNTLATRLTEDEGVTVLLLE) is a binding site for FAD. Histidine 475 functions as the Proton acceptor in the catalytic mechanism.

This sequence belongs to the GMC oxidoreductase family. Requires FAD as cofactor.

It carries out the reaction choline + A = betaine aldehyde + AH2. The enzyme catalyses betaine aldehyde + NAD(+) + H2O = glycine betaine + NADH + 2 H(+). Its pathway is amine and polyamine biosynthesis; betaine biosynthesis via choline pathway; betaine aldehyde from choline (cytochrome c reductase route): step 1/1. In terms of biological role, involved in the biosynthesis of the osmoprotectant glycine betaine. Catalyzes the oxidation of choline to betaine aldehyde and betaine aldehyde to glycine betaine at the same rate. The chain is Oxygen-dependent choline dehydrogenase from Pseudomonas fluorescens (strain Pf0-1).